Consider the following 443-residue polypeptide: MSKLNMTPREIVTYLDEYIIEQKEAKKFIAIALRNRYRRLQLEKSLQEEITPKNILMIGSTGVGKTEIARRMAKIMKLPFVKVEASKYTEVGFVGRDVESMVRDLVNNSVLLVENEHKEKLKDKIEEAVVEKIAKKLLPPLPSGVSEEKKQEYANSLLRMQQRIVQGELDSREIEIEVRKKSIEIDSNVPPEILRVQENLIKVFHKEQDKVKKTLSVKEAKEALKAEISDTLLDSEAIKMEGLKRAESSGVIFIDEIDKIAISPKEGGRQDPSKEGVQRDLLPIVEGSVVNTKYGSIKTEHILFIAAGAFHLSKPSDLIPELQGRFPLRVELENLTEEIMYMILTQTKTSIIKQYQALLKVEGVEVAFEDDAIKELAKLSYNANQKSEDIGARRLHTTIEKVLEDISFEAEDYSGQKVTITKELVQSKLGDLVADENLVKYIL.

Residues Ile-20, 62–67 (GVGKTE), Asp-255, Glu-321, and Arg-393 contribute to the ATP site.

This sequence belongs to the ClpX chaperone family. HslU subfamily. As to quaternary structure, a double ring-shaped homohexamer of HslV is capped on each side by a ring-shaped HslU homohexamer. The assembly of the HslU/HslV complex is dependent on binding of ATP.

It is found in the cytoplasm. ATPase subunit of a proteasome-like degradation complex; this subunit has chaperone activity. The binding of ATP and its subsequent hydrolysis by HslU are essential for unfolding of protein substrates subsequently hydrolyzed by HslV. HslU recognizes the N-terminal part of its protein substrates and unfolds these before they are guided to HslV for hydrolysis. This Helicobacter acinonychis (strain Sheeba) protein is ATP-dependent protease ATPase subunit HslU.